A 924-amino-acid chain; its full sequence is Type II inositol 3,4-bisphosphate 4-phosphatase (924 aa).

Residues 1-13 (MEIKEEGASEEGQ) show a composition bias toward basic and acidic residues. Disordered stretches follow at residues 1–25 (MEIK…SDPG), 481–516 (ILKK…HSDY), and 546–569 (DGGS…DAIP). In terms of domain architecture, C2 spans 23-165 (DPGDCQFTSI…LKSKEQLLVL (143 aa)).

This sequence belongs to the inositol 3,4-bisphosphate 4-phosphatase family.

It carries out the reaction a 1,2-diacyl-sn-glycero-3-phospho-(1D-myo-inositol-3,4-bisphosphate) + H2O = a 1,2-diacyl-sn-glycero-3-phospho-(1D-myo-inositol-3-phosphate) + phosphate. It catalyses the reaction 1D-myo-inositol 1,3,4-trisphosphate + H2O = 1D-myo-inositol 1,3-bisphosphate + phosphate. The catalysed reaction is 1D-myo-inositol 3,4-bisphosphate + H2O = 1D-myo-inositol 3-phosphate + phosphate. It functions in the pathway signal transduction; phosphatidylinositol signaling pathway. With respect to regulation, strongly inhibited by inositol hexakisphosphate. In terms of biological role, catalyzes the hydrolysis of the 4-position phosphate of phosphatidylinositol 3,4-bisphosphate, inositol 1,3,4-trisphosphate and inositol 3,4-bisphosphate. Plays a role in the late stages of macropinocytosis by dephosphorylating phosphatidylinositol 3,4-bisphosphate in membrane ruffles. Antagonizes the PI3K-AKT/PKB signaling pathway by dephosphorylating phosphoinositides and thereby modulating cell cycle progression and cell survival. The polypeptide is Type II inositol 3,4-bisphosphate 4-phosphatase (INPP4B) (Pongo abelii (Sumatran orangutan)).